Reading from the N-terminus, the 152-residue chain is Cytochrome c-type biogenesis protein CcmE (152 aa).

At 1 to 9 (MRGLKKQRR) the chain is on the cytoplasmic side. The chain crosses the membrane as a helical; Signal-anchor for type II membrane protein span at residues 10–30 (IQILIVAAVALTLSSVLIGYA). Residues 31-152 (LRDGINFFRP…PDGYARDGDS (122 aa)) lie on the Periplasmic side of the membrane. Residues H123 and Y127 each coordinate heme.

The protein belongs to the CcmE/CycJ family.

The protein resides in the cell inner membrane. Heme chaperone required for the biogenesis of c-type cytochromes. Transiently binds heme delivered by CcmC and transfers the heme to apo-cytochromes in a process facilitated by CcmF and CcmH. This chain is Cytochrome c-type biogenesis protein CcmE, found in Jannaschia sp. (strain CCS1).